A 5430-amino-acid chain; its full sequence is Microtubule-actin cross-linking factor 1 (5430 aa).

Positions 1-47 (MSSSDEETLSERSCRSERSCRSERSYRSERSGSLSPCPPGDTLPWNL) are disordered. Positions 1-295 (MSSSDEETLS…VITYVSSIYD (295 aa)) are actin-binding. The residue at position 4 (serine 4) is a Phosphoserine. Positions 9–30 (LSERSCRSERSCRSERSYRSER) are enriched in basic and acidic residues. Residues serine 35 and serine 57 each carry the phosphoserine modification. Calponin-homology (CH) domains are found at residues 78–181 (RVQK…LHFQ) and 194–298 (MSAK…DAFP). 2 LRR repeats span residues 148–171 (QRQV…LTLG) and 240–264 (LVDM…VAER). Serine 280 bears the Phosphoserine mark. LRR repeat units lie at residues 377–399 (LYKL…YHPN) and 441–464 (LNCE…LESG). Residues 868–925 (KSTLSVKAICDYRQIEITICKNDECVLEDNSQRTKWKVISPTGNEAMVPSVCLLIPPP) form the SH3 domain. An LRR 5 repeat occupies 1050–1073 (ISELKNIRLRLEECEQRLLKQIQS). Residue serine 1122 is modified to Phosphoserine. 3 LRR repeats span residues 1128-1154 (ATTL…VCLN), 1187-1210 (PADL…VKDK), and 1257-1282 (HRVI…DYRA). A phosphoserine mark is found at serine 1367 and serine 1376. LRR repeat units lie at residues 1579 to 1602 (QQEL…IQNH) and 1629 to 1653 (LTAL…TREA). 2 Spectrin repeats span residues 1816–1891 (ELQK…NFEE) and 1933–2041 (QYQQ…ALLQ). Phosphoserine is present on serine 1860. An LRR 11 repeat occupies 1869–1891 (KGDLRFVTISGQKVLETENNFEE). LRR repeat units follow at residues 2058 to 2083 (LQSM…LIQE) and 2194 to 2220 (IQEL…ALGS). The Spectrin 3 repeat unit spans residues 2399 to 2507 (RMEEVQKEAS…TVARQKQLEE (109 aa)). A phosphoserine mark is found at serine 2429 and serine 2454. 3 LRR repeats span residues 2444 to 2467 (KAFL…LAGL), 2534 to 2557 (GVLG…QFML), and 2702 to 2725 (KKRL…RMNR). Spectrin repeat units follow at residues 2733-2837 (TQQF…SRLK) and 2842-2945 (KAQK…SLEE). 2 positions are modified to phosphoserine: serine 2769 and serine 2895. LRR repeat units lie at residues 2984–3009 (NKNL…YLRD), 3105–3127 (NKIQ…MLEE), and 3214–3237 (KEQV…LIQS). Spectrin repeat units lie at residues 3169-3274 (EDFY…QLQE), 3281-3383 (KFQD…QLED), 3388-3491 (AKQF…SLLE), 3714-3818 (RSQQ…ARLE), 3825-3927 (NQFW…ALDE), 4047-4152 (LAEK…KLED), 4157-4261 (AVQY…HKLE), 4267-4370 (LGQF…QQLQ), 4375-4481 (QAQG…KLEE), 4486-4589 (ATEF…RSLD), 4594-4700 (RAKQ…KLEE), 4707-4808 (QFMD…RLEQ), and 4812-4916 (QAEE…QRLE). Threonine 3368 carries the post-translational modification Phosphothreonine. LRR repeat units follow at residues 3737–3761 (MALG…AFSI) and 3846–3870 (AQLP…QLRE). Residue serine 4074 is modified to Phosphoserine. Lysine 4252 is modified (N6-acetyllysine). Residues 4538-4561 (RDQIIELDQTGNQLKFLSQKQDVV) form an LRR 22 repeat. The segment at 4993-5023 (PTHAPFIEKSRSGSRKSLNQPTPPPMPILSQ) is disordered. Residue serine 5009 is modified to Phosphoserine. EF-hand domains follow at residues 5083 to 5118 (HKKS…SKFP) and 5119 to 5154 (TTKL…NKDA). Ca(2+) contacts are provided by aspartate 5096, aspartate 5098, aspartate 5100, lysine 5102, glutamate 5107, aspartate 5132, aspartate 5134, aspartate 5136, tyrosine 5138, and glutamate 5143. The GAR domain maps to 5159–5231 (TDADKIEDEV…EFLVKNDPCR (73 aa)). Residues 5159-5430 (TDADKIEDEV…ASPRTPCPKR (272 aa)) are C-terminal tail. The interval 5247-5430 (PEGASQGMTP…ASPRTPCPKR (184 aa)) is disordered. Residues 5267–5301 (SSRAASPTRSSSSASQSNHSCTSMPSSPATPASGT) are compositionally biased toward low complexity. Residue threonine 5296 is modified to Phosphothreonine. The span at 5317 to 5341 (TFHSSRTSLAGDTSNSSSPASTGAK) shows a compositional bias: polar residues. A phosphoserine mark is found at serine 5321 and serine 5334. Positions 5352-5366 (SRPGSRAGSRAGSRA) are enriched in low complexity. The interval 5355-5370 (GSRAGSRAGSRASSRR) is 4 X 4 AA tandem repeats of [GS]-S-R-[AR]. 2 positions are modified to phosphoserine: serine 5372 and serine 5375. The span at 5381–5391 (ETQSACSDTSE) shows a compositional bias: polar residues. The span at 5392–5403 (SSAAGGQGSSRR) shows a compositional bias: low complexity.

It belongs to the plakin or cytolinker family. In terms of assembly, interacts with MAPRE1, CLASP1, CLASP2 and GOLGA4. Interacts with AXIN1 and LRP6. Found in a complex composed of MACF1, APC; AXIN1, CTNNB1 and GSK3B. Interacts with CAMSAP3. Phosphorylated on serine residues in the C-terminal tail by GSK3B. Phosphorylation inhibits microtubule-binding and this plays a critical role in bulge stem cell migration and skin wound repair. Wnt-signaling can repress phosphorylation.

The protein resides in the cytoplasm. The protein localises to the cytoskeleton. It localises to the golgi apparatus. It is found in the cell membrane. Its subcellular location is the cell projection. The protein resides in the ruffle membrane. The protein localises to the membrane. Functionally, F-actin-binding protein which plays a role in cross-linking actin to other cytoskeletal proteins and also binds to microtubules. Plays an important role in ERBB2-dependent stabilization of microtubules at the cell cortex. Acts as a positive regulator of Wnt receptor signaling pathway and is involved in the translocation of AXIN1 and its associated complex (composed of APC, CTNNB1 and GSK3B) from the cytoplasm to the cell membrane. Has actin-regulated ATPase activity and is essential for controlling focal adhesions (FAs) assembly and dynamics. Interaction with CAMSAP3 at the minus ends of non-centrosomal microtubules tethers microtubules minus-ends to actin filaments, regulating focal adhesion size and cell migration. May play role in delivery of transport vesicles containing GPI-linked proteins from the trans-Golgi network through its interaction with GOLGA4. Plays a key role in wound healing and epidermal cell migration. Required for efficient upward migration of bulge cells in response to wounding and this function is primarily rooted in its ability to coordinate microtubule dynamics and polarize hair follicle stem cells. As a regulator of actin and microtubule arrangement and stabilization, it plays an essential role in neurite outgrowth, branching and spine formation during brain development. The chain is Microtubule-actin cross-linking factor 1 from Rattus norvegicus (Rat).